Consider the following 603-residue polypeptide: Bifunctional 3-dehydroquinate dehydratase/shikimate dehydrogenase, chloroplastic (603 aa).

Residues 1 to 10 (MAASSTNARL) are compositionally biased toward polar residues. Residues 1 to 22 (MAASSTNARLTNPPRLLSKPRL) form a disordered region. The transit peptide at 1–66 (MAASSTNARL…VVFSDQRRRR (66 aa)) directs the protein to the chloroplast. The span at 13-22 (PPRLLSKPRL) shows a compositional bias: low complexity. Positions 96-313 (ICAPVMADSI…QPTIKDLLDL (218 aa)) are 3-dehydroquinate dehydratase. The 3-dehydroshikimate site is built by Glu124, Arg126, and Arg155. The active-site Proton acceptor; for 3-dehydroquinate dehydratase activity is the His214. Positions 241, 279, 300, and 304 each coordinate 3-dehydroshikimate. Residue Lys241 is the Schiff-base intermediate with substrate; for 3-dehydroquinate dehydratase activity of the active site. The tract at residues 328–558 (IIGKPVSHSK…VYTPRITRLL (231 aa)) is shikimate dehydrogenase. Residues Ser336, Ser338, Thr381, Lys385, Asn406, and Asp423 each coordinate shikimate. The active-site For shikimate dehydrogenase activity is Lys385. The active-site For shikimate dehydrogenase activity is the Asp423. NADP(+) contacts are provided by Ala461, Gly463, Ala464, Asn483, Thr485, Arg488, Met525, and Ala548. Residue Tyr550 participates in shikimate binding. An NADP(+)-binding site is contributed by Gly571. Shikimate contacts are provided by Gln578 and Gln582.

The protein in the N-terminal section; belongs to the type-I 3-dehydroquinase family. This sequence in the C-terminal section; belongs to the shikimate dehydrogenase family. In terms of assembly, monomer.

The protein localises to the plastid. It is found in the chloroplast. It carries out the reaction 3-dehydroquinate = 3-dehydroshikimate + H2O. The enzyme catalyses shikimate + NADP(+) = 3-dehydroshikimate + NADPH + H(+). It functions in the pathway metabolic intermediate biosynthesis; chorismate biosynthesis; chorismate from D-erythrose 4-phosphate and phosphoenolpyruvate: step 3/7. The protein operates within metabolic intermediate biosynthesis; chorismate biosynthesis; chorismate from D-erythrose 4-phosphate and phosphoenolpyruvate: step 4/7. In terms of biological role, bifunctional dehydroquinate dehydratase-shikimate dehydrogenase enzyme that catalyzes two steps in the chorismate biosynthesis pathway. The sequence is that of Bifunctional 3-dehydroquinate dehydratase/shikimate dehydrogenase, chloroplastic from Arabidopsis thaliana (Mouse-ear cress).